Consider the following 456-residue polypeptide: ATP synthase subunit beta 1 (456 aa).

152–159 lines the ATP pocket; that stretch reads GGAGVGKS.

This sequence belongs to the ATPase alpha/beta chains family. F-type ATPases have 2 components, CF(1) - the catalytic core - and CF(0) - the membrane proton channel. CF(1) has five subunits: alpha(3), beta(3), gamma(1), delta(1), epsilon(1). CF(0) has three main subunits: a(1), b(2) and c(9-12). The alpha and beta chains form an alternating ring which encloses part of the gamma chain. CF(1) is attached to CF(0) by a central stalk formed by the gamma and epsilon chains, while a peripheral stalk is formed by the delta and b chains.

Its subcellular location is the cell membrane. It catalyses the reaction ATP + H2O + 4 H(+)(in) = ADP + phosphate + 5 H(+)(out). Produces ATP from ADP in the presence of a proton gradient across the membrane. The catalytic sites are hosted primarily by the beta subunits. The sequence is that of ATP synthase subunit beta 1 from Listeria monocytogenes serotype 4b (strain F2365).